Reading from the N-terminus, the 249-residue chain is (2S)-[(R)-hydroxy(phenyl)methyl]succinyl-CoA dehydrogenase subunit BbsC (249 aa).

It belongs to the short-chain dehydrogenases/reductases (SDR) family. In terms of assembly, heterotetramer composed of 2 inactive BbsC subunits and 2 active BbsD subunits.

It participates in xenobiotic degradation; toluene degradation. Functionally, involved in an anaerobic toluene degradation pathway. Catalytically inactive subunit, which is probably required for the structural and/or regulatory integrity of the catalytic subunit BbsD. This subunit cannot bind NAD(+) or substrate. The sequence is that of (2S)-[(R)-hydroxy(phenyl)methyl]succinyl-CoA dehydrogenase subunit BbsC from Thauera aromatica.